Here is a 347-residue protein sequence, read N- to C-terminus: MGDELAPCPVGTTAWPALIQLISKTPCMPQAASNTSLGLGDLRVPSSMLYWLFLPSSLLAAATLAVSPLLLVTILRNQRLRQEPHYLLPANILLSDLAYILLHMLISSSSLGGWELGRMACGILTDAVFAACTSTILSFTAIVLHTYLAVIHPLRYLSFMSHGAAWKAVALIWLVACCFPTFLIWLSKWQDAQLEEQGASYILPPSMGTQPGCGLLVIVTYTSILCVLFLCTALIANCFWRIYAEAKTSGIWGQGYSRARGTLLIHSVLITLYVSTGVVFSLDMVLTRYHHIDSGTHTWLLAANSEVLMMLPRAMLTYLYLLRYRQLLGMVRGHLPSRRHQAIFTIS.

Topologically, residues 1–51 are extracellular; sequence MGDELAPCPVGTTAWPALIQLISKTPCMPQAASNTSLGLGDLRVPSSMLYW. An N-linked (GlcNAc...) asparagine glycan is attached at asparagine 34. A helical transmembrane segment spans residues 52-72; sequence LFLPSSLLAAATLAVSPLLLV. Over 73–85 the chain is Cytoplasmic; the sequence is TILRNQRLRQEPH. A helical transmembrane segment spans residues 86–106; sequence YLLPANILLSDLAYILLHMLI. Residues 107 to 130 are Extracellular-facing; that stretch reads SSSSLGGWELGRMACGILTDAVFA. A helical transmembrane segment spans residues 131 to 151; that stretch reads ACTSTILSFTAIVLHTYLAVI. At 152–165 the chain is on the cytoplasmic side; that stretch reads HPLRYLSFMSHGAA. The chain crosses the membrane as a helical span at residues 166–186; sequence WKAVALIWLVACCFPTFLIWL. Residues 187 to 214 are Extracellular-facing; that stretch reads SKWQDAQLEEQGASYILPPSMGTQPGCG. The chain crosses the membrane as a helical span at residues 215–235; that stretch reads LLVIVTYTSILCVLFLCTALI. Topologically, residues 236–261 are cytoplasmic; that stretch reads ANCFWRIYAEAKTSGIWGQGYSRARG. Residues 262-282 form a helical membrane-spanning segment; sequence TLLIHSVLITLYVSTGVVFSL. Residues 283-299 lie on the Extracellular side of the membrane; the sequence is DMVLTRYHHIDSGTHTW. The helical transmembrane segment at 300 to 322 threads the bilayer; the sequence is LLAANSEVLMMLPRAMLTYLYLL. Topologically, residues 323–347 are cytoplasmic; it reads RYRQLLGMVRGHLPSRRHQAIFTIS.

Belongs to the G-protein coupled receptor 1 family. In terms of tissue distribution, expression restricted to nervous system and testis. Is also detected in several tumors types, most notably prostate cancer.

The protein localises to the cell membrane. Its function is as follows. Orphan receptor. In Homo sapiens (Human), this protein is Probable G-protein coupled receptor 148 (GPR148).